A 296-amino-acid chain; its full sequence is Probable DNA-directed RNA polymerase III subunit RPC6 (296 aa).

It belongs to the eukaryotic RPC34/RPC39 RNA polymerase subunit family.

It is found in the nucleus. DNA-dependent RNA polymerase catalyzes the transcription of DNA into RNA using the four ribonucleoside triphosphates as substrates. Specific peripheric component of RNA polymerase III which synthesizes small RNAs, such as 5S rRNA and tRNAs. The protein is Probable DNA-directed RNA polymerase III subunit RPC6 of Caenorhabditis elegans.